Here is a 125-residue protein sequence, read N- to C-terminus: Protein JAZ13 (125 aa).

The EAR signature appears at 6–10 (LDLHL). The tract at residues 99–125 (KKRSKSFTLTPNYTSSTSSSSSSLHNF) is disordered. The segment covering 112–125 (TSSTSSSSSSLHNF) has biased composition (low complexity).

In terms of assembly, monomer. Lack of homodimerization, and very weak or no interaction with AFPH2/NINJA and other JAZ proteins. Interacts (via EAR motif) with TPL. Interacts (via jas motif) with MYC2. Phosphorylated at multiple serine residues.

Non-TIFY functional repressor of jasmonate (JA)-mediated growth and defense responses. Intrinsically resistant to JA-induced turnover, probably due to the absence of the canonical degron that strongly interacts with COI1 in the presence of JA-Ile in the TIFY/JAZ proteins. The chain is Protein JAZ13 from Arabidopsis thaliana (Mouse-ear cress).